A 95-amino-acid polypeptide reads, in one-letter code: MERAPEDAGPQREPYNEWALELLEELKNEAVRHFPRIWLHGLGQHIYNTYGDTWEGVEAIIRILQQLLFIHYRIGCQHSRIGITPQRRRNGTSRS.

A homooligomerization region spans residues 1-42; sequence MERAPEDAGPQREPYNEWALELLEELKNEAVRHFPRIWLHGL. Residues S79, S93, and S95 each carry the phosphoserine; by host modification.

The protein belongs to the HIV-1 VPR protein family. Homooligomer, may form homodimer. Interacts with p6-gag region of the Pr55 Gag precursor protein through a (Leu-X-X)4 motif near the C-terminus of the P6gag protein. Interacts with host UNG. May interact with host RAD23A/HHR23A. Interacts with host VPRBP/DCAF1, leading to hijack the CUL4A-RBX1-DDB1-DCAF1/VPRBP complex, mediating ubiquitination of host proteins such as TERT and ZGPAT and arrest of the cell cycle in G2 phase. In terms of processing, phosphorylated on several residues by host. These phosphorylations regulate VPR activity for the nuclear import of the HIV-1 pre-integration complex.

Its subcellular location is the virion. The protein localises to the host nucleus. It is found in the host extracellular space. In terms of biological role, during virus replication, may deplete host UNG protein, and incude G2-M cell cycle arrest. Acts by targeting specific host proteins for degradation by the 26S proteasome, through association with the cellular CUL4A-DDB1 E3 ligase complex by direct interaction with host VPRPB/DCAF-1. Cell cycle arrest reportedly occurs within hours of infection and is not blocked by antiviral agents, suggesting that it is initiated by the VPR carried into the virion. Additionally, VPR induces apoptosis in a cell cycle dependent manner suggesting that these two effects are mechanistically linked. Detected in the serum and cerebrospinal fluid of AIDS patient, VPR may also induce cell death to bystander cells. Functionally, during virus entry, plays a role in the transport of the viral pre-integration (PIC) complex to the host nucleus. This function is crucial for viral infection of non-dividing macrophages. May act directly at the nuclear pore complex, by binding nucleoporins phenylalanine-glycine (FG)-repeat regions. This Human immunodeficiency virus type 1 group N (isolate YBF30) (HIV-1) protein is Protein Vpr.